We begin with the raw amino-acid sequence, 105 residues long: ATP synthase subunit c (105 aa).

3 consecutive transmembrane segments (helical) span residues 3 to 23, 32 to 52, and 78 to 98; these read FLALFFLALVGVAFAYDGGMD, SILGAMIGLGIAAFGGAIGMG, and VAMAMIEAQVIYTLVFAIIAI.

Belongs to the ATPase C chain family. F-type ATPases have 2 components, F(1) - the catalytic core - and F(0) - the membrane proton channel. F(1) has five subunits: alpha(3), beta(3), gamma(1), delta(1), epsilon(1). F(0) has three main subunits: a(1), b(2) and c(10-14). The alpha and beta chains form an alternating ring which encloses part of the gamma chain. F(1) is attached to F(0) by a central stalk formed by the gamma and epsilon chains, while a peripheral stalk is formed by the delta and b chains.

Its subcellular location is the cell inner membrane. Functionally, f(1)F(0) ATP synthase produces ATP from ADP in the presence of a proton or sodium gradient. F-type ATPases consist of two structural domains, F(1) containing the extramembraneous catalytic core and F(0) containing the membrane proton channel, linked together by a central stalk and a peripheral stalk. During catalysis, ATP synthesis in the catalytic domain of F(1) is coupled via a rotary mechanism of the central stalk subunits to proton translocation. In terms of biological role, key component of the F(0) channel; it plays a direct role in translocation across the membrane. A homomeric c-ring of between 10-14 subunits forms the central stalk rotor element with the F(1) delta and epsilon subunits. The protein is ATP synthase subunit c of Helicobacter acinonychis (strain Sheeba).